The chain runs to 227 residues: PKHD-type hydroxylase Neut_0373 (227 aa).

Residues 78 to 179 (KIMPPFFNRY…RIACFMFIQS (102 aa)) form the Fe2OG dioxygenase domain. Fe cation-binding residues include His-97, Asp-99, and His-160. Arg-170 is a binding site for 2-oxoglutarate.

It depends on Fe(2+) as a cofactor. The cofactor is L-ascorbate.

This chain is PKHD-type hydroxylase Neut_0373, found in Nitrosomonas eutropha (strain DSM 101675 / C91 / Nm57).